The chain runs to 229 residues: Putative N-acetylmannosamine-6-phosphate 2-epimerase (229 aa).

Belongs to the NanE family.

It catalyses the reaction an N-acyl-D-glucosamine 6-phosphate = an N-acyl-D-mannosamine 6-phosphate. Its pathway is amino-sugar metabolism; N-acetylneuraminate degradation; D-fructose 6-phosphate from N-acetylneuraminate: step 3/5. Its function is as follows. Converts N-acetylmannosamine-6-phosphate (ManNAc-6-P) to N-acetylglucosamine-6-phosphate (GlcNAc-6-P). This Shigella sonnei (strain Ss046) protein is Putative N-acetylmannosamine-6-phosphate 2-epimerase.